The primary structure comprises 269 residues: uncharacterized protein (269 aa).

Positions 1–22 are disordered; that stretch reads MSANGTDQQSDHGHSTSNNKDC.

This is an uncharacterized protein from Gallus gallus (Chicken).